Here is a 142-residue protein sequence, read N- to C-terminus: Large ribosomal subunit protein uL11 (142 aa).

Belongs to the universal ribosomal protein uL11 family. As to quaternary structure, part of the ribosomal stalk of the 50S ribosomal subunit. Interacts with L10 and the large rRNA to form the base of the stalk. L10 forms an elongated spine to which L12 dimers bind in a sequential fashion forming a multimeric L10(L12)X complex. In terms of processing, one or more lysine residues are methylated.

Its function is as follows. Forms part of the ribosomal stalk which helps the ribosome interact with GTP-bound translation factors. The polypeptide is Large ribosomal subunit protein uL11 (Magnetococcus marinus (strain ATCC BAA-1437 / JCM 17883 / MC-1)).